The following is a 468-amino-acid chain: Two-component response regulator-like APRR9 (468 aa).

In terms of domain architecture, Response regulatory spans 38 to 156; the sequence is RVLLVESDYS…ELKNLWQHVW (119 aa). Composition is skewed to polar residues over residues 168–177 and 194–203; these read HAQSLPASQH and DQGSGAQAIN. 3 disordered regions span residues 168–203, 302–416, and 442–468; these read HAQSLPASQHNLEDTDETCEDSRYHSDQGSGAQAIN, VVAL…SRSQ, and RKKLAEQRPRVKGQFVRTVNSDASTKS. Over residues 315–327 the composition is skewed to basic and acidic residues; that stretch reads TPTESHEKLRKVT. Residues 328-364 show a composition bias toward polar residues; the sequence is SDQGSATTSSNQENIGSSSVSFRNQVLQSTVTNQKQD. Basic and acidic residues-rich tracts occupy residues 371 to 382 and 400 to 409; these read SNREKAASKEVE and EKPKEEESAK. One can recognise a CCT domain in the interval 417–459; the sequence is REAALMKFRLKRKDRCFDKKVRYQSRKKLAEQRPRVKGQFVRT. The span at 458–468 shows a compositional bias: polar residues; the sequence is RTVNSDASTKS.

Belongs to the ARR-like family. Phosphorylated. Phosphorylation varies throughout the diurnal cycle.

The protein localises to the nucleus. In terms of biological role, transcriptional repressor of CCA1 and LHY, and positive regulator of LWD1 and LWD2 expression. Controls photoperiodic flowering response and temperature compensation. Involved in the positive and negative feedback loops of the circadian clock. Expression of several members of the ARR-like family is controlled by circadian rhythm. Regulated at the transcriptional level by a corepressor complex consisting of ELF4, ELF3, and LUX. APRR9, APRR7, and APRR5 coordinately act on the upstream region of the target genes to repress their expression from noon until midnight. The particular coordinated sequential expression of APRR9, APRR7, APRR5, APRR3 and APPR1 result to circadian waves that may be at the basis of the endogenous circadian clock. The sequence is that of Two-component response regulator-like APRR9 (APRR9) from Arabidopsis thaliana (Mouse-ear cress).